A 523-amino-acid polypeptide reads, in one-letter code: Signal peptide peptidase-like 2A (523 aa).

The signal sequence occupies residues 1 to 25; the sequence is MGLLHSLHAPAAALLWSCLLGLAAA. Residues 26-175 lie on the Lumenal side of the membrane; the sequence is QEAILHASTN…PSWPNFDYTL (150 aa). 6 N-linked (GlcNAc...) asparagine glycosylation sites follow: Asn51, Asn61, Asn69, Asn119, Asn129, and Asn135. In terms of domain architecture, PA spans 70 to 155; sequence LTGTALCHLS…KDFKDMKETL (86 aa). A helical membrane pass occupies residues 176-196; it reads VVIFVIAVFTVALGGYWSGLI. Topologically, residues 197–224 are cytoplasmic; sequence ELENMKSVEDAEDRETRKKKDDYLTFSP. The chain crosses the membrane as a helical span at residues 225-245; it reads LTVVVFVVICCIMIVLLYFFY. At 246–247 the chain is on the lumenal side; that stretch reads RW. A helical transmembrane segment spans residues 248-268; the sequence is LVYVMIAIFCIASSMSLYNCL. The Cytoplasmic segment spans residues 269–288; the sequence is SALIHRMPCGQCTILCCGKN. Residues 289-309 traverse the membrane as a helical segment; that stretch reads IKVSLIFLSGLCISVAVVWAV. Residues 310–315 lie on the Lumenal side of the membrane; it reads FRNEDR. A helical transmembrane segment spans residues 316–336; the sequence is WAWILQDILGIAFCLNLIKTM. The Cytoplasmic segment spans residues 337-344; it reads KLPNFMSC. A helical membrane pass occupies residues 345-365; the sequence is VILLGLLLIYDVFFVFITPFI. Asp355 is a catalytic residue. Over 366–403 the chain is Lumenal; the sequence is TKNGESIMVELAAGPFENAEKLPVVIRVPKLMGYSVMS. Residues 404 to 424 form a helical membrane-spanning segment; the sequence is VCSVPVSVLGFGDIIVPGLLI. Asp416 is an active-site residue. At 425-440 the chain is on the cytoplasmic side; that stretch reads AYCRRFDVQTGSSIYY. A helical transmembrane segment spans residues 441 to 461; the sequence is ISSTIAYAVGMIITFVVLMVM. Over 462–463 the chain is Lumenal; the sequence is KT. Residues 464–484 traverse the membrane as a helical segment; it reads GQPALLYLVPCTLITVSVVAW. Positions 466–468 match the PAL motif; sequence PAL. Topologically, residues 485 to 523 are cytoplasmic; the sequence is SRKEMKKFWKGSSYQVMDHLDYSTNEENPVTTDEQIVQQ. The short motif at 498 to 501 is the YXXo lysosomal targeting motif element; sequence YQVM.

This sequence belongs to the peptidase A22B family. Interacts with ITM2B. In terms of processing, glycosylated.

It localises to the late endosome membrane. The protein localises to the lysosome membrane. It is found in the membrane. Intramembrane-cleaving aspartic protease (I-CLiP) that cleaves type II membrane signal peptides in the hydrophobic plane of the membrane. Functions in FASLG, ITM2B and TNF processing. Catalyzes the intramembrane cleavage of the anchored fragment of shed TNF-alpha (TNF), which promotes the release of the intracellular domain (ICD) for signaling to the nucleus. Also responsible for the intramembrane cleavage of Fas antigen ligand FASLG, which promotes the release of the intracellular FasL domain (FasL ICD). Essential for degradation of the invariant chain CD74 that plays a central role in the function of antigen-presenting cells in the immune system. Plays a role in the regulation of innate and adaptive immunity. This chain is Signal peptide peptidase-like 2A, found in Mus musculus (Mouse).